Here is a 73-residue protein sequence, read N- to C-terminus: Probable minor pilin MMP0528 (73 aa).

The propeptide occupies 1–10 (MLKKLYSKKG). The QXSXEXXXL signature appears at 11–19 (QVSMEMGIL).

The N-terminus is probably cleaved by the prepilin peptidase EppA, which recognizes the class III signal sequence.

The protein resides in the secreted. Its subcellular location is the cell surface. The protein localises to the fimbrium. In Methanococcus maripaludis (strain DSM 14266 / JCM 13030 / NBRC 101832 / S2 / LL), this protein is Probable minor pilin MMP0528.